The following is an 824-amino-acid chain: Fibroblast growth factor receptor 2 (824 aa).

The N-terminal stretch at 1 to 21 (MFSWSYLMGLVMVATATLSLA) is a signal peptide. Residues 22 to 374 (RPSYNIAEDT…LDSSSSEYTE (353 aa)) lie on the Extracellular side of the membrane. An Ig-like C2-type 1 domain is found at 25–125 (YNIAEDTTLE…ETRYFIVNIT (101 aa)). Cys-62 and Cys-107 are oxidised to a cystine. 3 N-linked (GlcNAc...) asparagine glycosylation sites follow: Asn-83, Asn-123, and Asn-128. The interval 125-152 (TDGNSSGDDEDDNDGSEDFTNDNNHKRA) is disordered. Positions 131 to 144 (GDDEDDNDGSEDFT) are enriched in acidic residues. Ig-like C2-type domains are found at residues 153–246 (PYWT…YHLD) and 254–356 (PPIL…AWLT). The segment at 160 to 177 (KLEKKLHAVPAANTVKFR) is heparin-binding. An intrachain disulfide couples Cys-178 to Cys-230. Residues Asn-227, Asn-240, Asn-264, Asn-295, Asn-316, and Asn-329 are each glycosylated (N-linked (GlcNAc...) asparagine). Cys-277 and Cys-340 are oxidised to a cystine. Residues 375 to 395 (IAIYCVGGFLIACMIGTIMMC) form a helical membrane-spanning segment. Residues 396–824 (HMKGRGKKSD…PLKHEATQPA (429 aa)) lie on the Cytoplasmic side of the membrane. The residue at position 463 (Tyr-463) is a Phosphotyrosine; by autocatalysis. Residues 478-767 (LTLGKPLGEG…LTQTTNEEYL (290 aa)) form the Protein kinase domain. ATP contacts are provided by residues 484-492 (LGEGCFGQV), Lys-514, 562-564 (EYA), and Asn-568. Tyr-583 carries the post-translational modification Phosphotyrosine; by autocatalysis. The active-site Proton acceptor is Asp-623. Phosphotyrosine; by autocatalysis is present on residues Tyr-653, Tyr-654, and Tyr-766. Positions 801–824 (SMNLAFPNPNTQMAPLKHEATQPA) are disordered.

It belongs to the protein kinase superfamily. Tyr protein kinase family. Fibroblast growth factor receptor subfamily. Monomer. Homodimer after ligand binding. Post-translationally, autophosphorylated. Binding of FGF family members together with heparan sulfate proteoglycan or heparin promotes receptor dimerization and autophosphorylation on tyrosine residues. Autophosphorylation occurs in trans between the two FGFR molecules present in the dimer. N-glycosylated in the endoplasmic reticulum. The N-glycan chains undergo further maturation to an Endo H-resistant form in the Golgi apparatus. In terms of processing, ubiquitinated. FGFR2 is rapidly ubiquitinated after autophosphorylation, leading to internalization and degradation. Subject to degradation both in lysosomes and by the proteasome.

The protein localises to the cell membrane. The protein resides in the golgi apparatus. It is found in the cytoplasmic vesicle. It carries out the reaction L-tyrosyl-[protein] + ATP = O-phospho-L-tyrosyl-[protein] + ADP + H(+). With respect to regulation, present in an inactive conformation in the absence of bound ligand. Ligand binding leads to dimerization and activation by autophosphorylation on tyrosine residues. Tyrosine-protein kinase that acts as a cell-surface receptor for fibroblast growth factors and plays an essential role in the regulation of cell proliferation, differentiation, migration and apoptosis, and in the regulation of embryonic development. Required for normal embryonic patterning, limb bud development, lung morphogenesis, osteogenesis and skin development. Plays an essential role in the regulation of osteoblast differentiation, proliferation and apoptosis, and is required for normal skeleton development. Promotes cell proliferation in keratinocytes and immature osteoblasts, but promotes apoptosis in differentiated osteoblasts. Phosphorylates PLCG1, FRS2 and PAK4. Ligand binding leads to the activation of several signaling cascades. Activation of PLCG1 leads to the production of the cellular signaling molecules diacylglycerol and inositol 1,4,5-trisphosphate. Phosphorylation of FRS2 triggers recruitment of GRB2, GAB1, PIK3R1 and SOS1, and mediates activation of RAS, MAPK1/ERK2, MAPK3/ERK1 and the MAP kinase signaling pathway, as well as of the AKT1 signaling pathway. FGFR2 signaling is down-regulated by ubiquitination, internalization and degradation. Mutations that lead to constitutive kinase activation or impair normal FGFR2 maturation, internalization and degradation lead to aberrant signaling. Over-expressed FGFR2 promotes activation of STAT1. The sequence is that of Fibroblast growth factor receptor 2 (FGFR2) from Pleurodeles waltl (Iberian ribbed newt).